The chain runs to 123 residues: Large ribosomal subunit protein uL29 (123 aa).

It belongs to the universal ribosomal protein uL29 family. Component of the large ribosomal subunit.

Its subcellular location is the cytoplasm. Functionally, component of the large ribosomal subunit. The ribosome is a large ribonucleoprotein complex responsible for the synthesis of proteins in the cell. The chain is Large ribosomal subunit protein uL29 (rpl35) from Hippocampus comes (Tiger tail seahorse).